The primary structure comprises 353 residues: 3-isopropylmalate dehydrogenase (353 aa).

76–89 (GPKWDDPRAKVRPE) is an NAD(+) binding site. 4 residues coordinate substrate: R96, R106, R134, and D223. Residues D223, D247, and D251 each contribute to the Mg(2+) site. 281 to 293 (GSAPDIAGKGIAN) contacts NAD(+).

The protein belongs to the isocitrate and isopropylmalate dehydrogenases family. LeuB type 1 subfamily. As to quaternary structure, homodimer. The cofactor is Mg(2+). Mn(2+) is required as a cofactor.

It localises to the cytoplasm. It carries out the reaction (2R,3S)-3-isopropylmalate + NAD(+) = 4-methyl-2-oxopentanoate + CO2 + NADH. The protein operates within amino-acid biosynthesis; L-leucine biosynthesis; L-leucine from 3-methyl-2-oxobutanoate: step 3/4. Its function is as follows. Catalyzes the oxidation of 3-carboxy-2-hydroxy-4-methylpentanoate (3-isopropylmalate) to 3-carboxy-4-methyl-2-oxopentanoate. The product decarboxylates to 4-methyl-2 oxopentanoate. The sequence is that of 3-isopropylmalate dehydrogenase from Anaeromyxobacter dehalogenans (strain 2CP-C).